The chain runs to 125 residues: Small ribosomal subunit protein uS12m (125 aa).

Disordered stretches follow at residues 1 to 23 (MPTLNQLIRHGREEKRRTDRTRA) and 104 to 125 (LMGIPGRRSGRSKYGAEKPKSI). Residues 10 to 23 (HGREEKRRTDRTRA) show a composition bias toward basic and acidic residues.

It belongs to the universal ribosomal protein uS12 family.

Its subcellular location is the mitochondrion. Functionally, protein S12 is involved in the translation initiation step. This is Small ribosomal subunit protein uS12m (RPS12) from Raphanus sativus (Radish).